The primary structure comprises 163 residues: uncharacterized protein (163 aa).

Residues 101 to 162 (LESMKVERKP…KMGERILERE (62 aa)) adopt a coiled-coil conformation.

This is an uncharacterized protein from Aquifex aeolicus (strain VF5).